A 690-amino-acid chain; its full sequence is Protein O-mannosyl-transferase F38B6.6 (690 aa).

Positions 1–24 are disordered; sequence MKKHLHHKVSGSCDPGDRSPKEKG. Residues 1-32 lie on the Cytoplasmic side of the membrane; it reads MKKHLHHKVSGSCDPGDRSPKEKGRSQGIRNL. A compositionally biased stretch (basic and acidic residues) spans 15–24; sequence PGDRSPKEKG. Residues 33 to 53 traverse the membrane as a helical segment; that stretch reads LILISLSIIPYLSCLGGDFVF. The Extracellular segment spans residues 54 to 110; it reads DDAESIVNNPIVNGKDPLLQIFSRDFWGRSISSSNSHKSYRPVTTFTFWLNYKLHET. A helical transmembrane segment spans residues 111 to 131; the sequence is STLGYHVVNIICHTVATLVFY. Over 132-138 the chain is Cytoplasmic; the sequence is KLGKQLE. The chain crosses the membrane as a helical span at residues 139–159; the sequence is HIFDFFNIAFSASILFAVHPV. Topologically, residues 160–166 are extracellular; sequence HTEAVAN. N-linked (GlcNAc...) asparagine glycosylation is present at asparagine 166. Residues 167–187 form a helical membrane-spanning segment; that stretch reads ITGRAELLMTIFSLAALILHV. The Cytoplasmic segment spans residues 188–234; the sequence is KNREINCKFVLLVILSTLSKEQGLMTIPIAICIDFLAHRSCRSNFVR. The chain crosses the membrane as a helical span at residues 235–255; the sequence is MICLLVAIGFLRMMVNGFEAA. Topologically, residues 256–273 are extracellular; the sequence is KFTKLDNPTAFLNSKFYR. The helical transmembrane segment at 274-294 threads the bilayer; that stretch reads MINYTYIWLYHAYLLVIPVNL. Residues 295 to 307 lie on the Cytoplasmic side of the membrane; it reads CFDYSMGCISSIT. A helical transmembrane segment spans residues 308–328; sequence TMWDLRALSPVLIFTIVIIGV. Residues 329-341 are Extracellular-facing; the sequence is KFQNECRAFTLSS. The helical transmembrane segment at 342 to 362 threads the bilayer; sequence LMGIISFLPASNIFFTVGFSI. The Cytoplasmic segment spans residues 363-365; the sequence is AER. A helical transmembrane segment spans residues 366–386; it reads VLYLPSAGFCLLCAIIFKKLS. Topologically, residues 387–690 are extracellular; the sequence is VHFKNADVLS…EHNCYNSTLP (304 aa). 5 TPR repeats span residues 398-431, 432-465, 466-499, 500-533, and 534-567; these read TLILLLISKTYRRSGEWKTELSLYSSGLSVCPTN, AKIHYNLGKVLGDNGLTKDAEKNYWNAIKLDPSY, EQALNNLGNLLEKSGDSKTAESLLARAVTLRPSF, AVAWMNLGISQMNLKKYYEAEKSLKNSLLIRPNS, and AHCLFNLGVLYQRTNRDEMAMSAWKNATRIDPSH. Residues asparagine 559, asparagine 600, and asparagine 617 are each glycosylated (N-linked (GlcNAc...) asparagine). 2 TPR repeats span residues 602-635 and 636-669; these read SRVHMQIGSCHAKHSNFTAAENHIKSAIDLNPTS and VLFHANLGILYQRMSRHKEAESQYRIVLALDSKN. Asparagine 686 is a glycosylation site (N-linked (GlcNAc...) asparagine).

It belongs to the TMTC family.

It is found in the membrane. The protein localises to the endoplasmic reticulum. The enzyme catalyses a di-trans,poly-cis-dolichyl beta-D-mannosyl phosphate + L-seryl-[protein] = 3-O-(alpha-D-mannosyl)-L-seryl-[protein] + a di-trans,poly-cis-dolichyl phosphate + H(+). It catalyses the reaction a di-trans,poly-cis-dolichyl beta-D-mannosyl phosphate + L-threonyl-[protein] = 3-O-(alpha-D-mannosyl)-L-threonyl-[protein] + a di-trans,poly-cis-dolichyl phosphate + H(+). It participates in protein modification; protein glycosylation. In terms of biological role, transfers mannosyl residues to the hydroxyl group of serine or threonine residues. This is Protein O-mannosyl-transferase F38B6.6 from Caenorhabditis elegans.